A 476-amino-acid polypeptide reads, in one-letter code: Cys-Gly metallodipeptidase dug1 (476 aa).

Position 99 (histidine 99) interacts with Zn(2+). Aspartate 101 is a catalytic residue. Aspartate 133 lines the Zn(2+) pocket. Glutamate 167 (proton acceptor) is an active-site residue. Residues glutamate 168, aspartate 196, and histidine 446 each coordinate Zn(2+).

The protein belongs to the peptidase M20A family. Homodimer. Component of the GSH degradosomal complex. The cofactor is Zn(2+). Requires Mn(2+) as cofactor.

Its subcellular location is the cytoplasm. Functionally, catalytic component of the GSH degradosomal complex involved in the degradation of glutathione (GSH) and other peptides containing a gamma-glu-X bond. Has a Gly-Cys dipeptidase activity. The protein is Cys-Gly metallodipeptidase dug1 (dug1) of Schizosaccharomyces pombe (strain 972 / ATCC 24843) (Fission yeast).